A 270-amino-acid chain; its full sequence is NADPH-dependent 7-cyano-7-deazaguanine reductase (270 aa).

A substrate-binding site is contributed by 79-81 (IES). 81–82 (SK) contributes to the NADPH binding site. Residue Cys-177 is the Thioimide intermediate of the active site. Asp-184 (proton donor) is an active-site residue. 216 to 217 (HE) is a substrate binding site. 245 to 246 (RG) is a binding site for NADPH.

This sequence belongs to the GTP cyclohydrolase I family. QueF type 2 subfamily. Homodimer.

Its subcellular location is the cytoplasm. The enzyme catalyses 7-aminomethyl-7-carbaguanine + 2 NADP(+) = 7-cyano-7-deazaguanine + 2 NADPH + 3 H(+). The protein operates within tRNA modification; tRNA-queuosine biosynthesis. Functionally, catalyzes the NADPH-dependent reduction of 7-cyano-7-deazaguanine (preQ0) to 7-aminomethyl-7-deazaguanine (preQ1). The polypeptide is NADPH-dependent 7-cyano-7-deazaguanine reductase (Acinetobacter baumannii (strain ACICU)).